Here is a 70-residue protein sequence, read N- to C-terminus: Conotoxin Cl9.1 (70 aa).

Residues 1–20 (MMGKLGVVLFICLVLFPLET) form the signal peptide. Positions 21–50 (LQLEGGQQADRHVDQLEGNPNRETRTIEVR) are excised as a propeptide. Disulfide bonds link cysteine 51-cysteine 63, cysteine 56-cysteine 67, and cysteine 61-cysteine 70.

Belongs to the conotoxin M superfamily. As to expression, expressed by the venom duct.

The protein localises to the secreted. The protein is Conotoxin Cl9.1 of Californiconus californicus (California cone).